The chain runs to 152 residues: Ubiquitin-conjugating enzyme E2 N (152 aa).

Residues 3–149 (GLPRRIIKET…ARAWTRLYAM (147 aa)) form the UBC core domain. Position 82 is an N6-acetyllysine (Lys82). Catalysis depends on Cys87, which acts as the Glycyl thioester intermediate. Residue Lys92 forms a Glycyl lysine isopeptide (Lys-Gly) (interchain with G-Cter in ISG15) linkage. Phosphoserine is present on Ser131.

This sequence belongs to the ubiquitin-conjugating enzyme family. As to quaternary structure, heterodimer with UBE2V2. Interacts (UBE2V2-UBE2N heterodimer) with the E3 ligase STUB1 (via the U-box domain); the complex has a specific 'Lys-63'-linked polyubiquitination activity. Interacts with RNF8 and RNF168. Interacts with RNF11. Interacts with the E3 ligases, HLTF and SHPRH; the interactions promote the 'Lys-63'-linked polyubiquitination of PCNA upon genotoxic stress and lead to DNA repair. Interacts with ARIH2 (via RING-type 2). Interacts with OTUB1; leading to inhibit E2-conjugating activity. Interacts with GPS2; leading to inhibit E2-conjugating activity. Interacts with RIGI and RNF135; involved in RIGI ubiquitination and activation. In terms of processing, conjugation to ISG15 impairs formation of the thioester bond with ubiquitin but not interaction with UBE2V2.

It carries out the reaction S-ubiquitinyl-[E1 ubiquitin-activating enzyme]-L-cysteine + [E2 ubiquitin-conjugating enzyme]-L-cysteine = [E1 ubiquitin-activating enzyme]-L-cysteine + S-ubiquitinyl-[E2 ubiquitin-conjugating enzyme]-L-cysteine.. The protein operates within protein modification; protein ubiquitination. Its activity is regulated as follows. Activity is inhibited by binding to OTUB1, which prevents 'Lys-63'-linked polyubiquitination. Activity is inhibited by GPS2, leading to prevent 'Lys-63'-linked polyubiquitination. Functionally, the UBE2V1-UBE2N and UBE2V2-UBE2N heterodimers catalyze the synthesis of non-canonical 'Lys-63'-linked polyubiquitin chains. This type of polyubiquitination does not lead to protein degradation by the proteasome. Mediates transcriptional activation of target genes. Plays a role in the control of progress through the cell cycle and differentiation. Plays a role in the error-free DNA repair pathway and contributes to the survival of cells after DNA damage. Acts together with the E3 ligases, HLTF and SHPRH, in the 'Lys-63'-linked poly-ubiquitination of PCNA upon genotoxic stress, which is required for DNA repair. Appears to act together with E3 ligase RNF5 in the 'Lys-63'-linked polyubiquitination of JKAMP thereby regulating JKAMP function by decreasing its association with components of the proteasome and ERAD. Promotes TRIM5 capsid-specific restriction activity and the UBE2V1-UBE2N heterodimer acts in concert with TRIM5 to generate 'Lys-63'-linked polyubiquitin chains which activate the MAP3K7/TAK1 complex which in turn results in the induction and expression of NF-kappa-B and MAPK-responsive inflammatory genes. Together with RNF135 and UB2V1, catalyzes the viral RNA-dependent 'Lys-63'-linked polyubiquitination of RIGI to activate the downstream signaling pathway that leads to interferon beta production. UBE2V1-UBE2N together with TRAF3IP2 E3 ubiquitin ligase mediate 'Lys-63'-linked polyubiquitination of TRAF6, a component of IL17A-mediated signaling pathway. In Rattus norvegicus (Rat), this protein is Ubiquitin-conjugating enzyme E2 N (Ube2n).